Consider the following 365-residue polypeptide: UDP-N-acetylglucosamine--N-acetylmuramyl-(pentapeptide) pyrophosphoryl-undecaprenol N-acetylglucosamine transferase (365 aa).

UDP-N-acetyl-alpha-D-glucosamine contacts are provided by residues 19–21, Asn-131, Arg-170, Ser-201, Ile-255, 274–279, and Gln-300; these read TGG and ALTVTE.

This sequence belongs to the glycosyltransferase 28 family. MurG subfamily.

The protein resides in the cell inner membrane. The enzyme catalyses di-trans,octa-cis-undecaprenyl diphospho-N-acetyl-alpha-D-muramoyl-L-alanyl-D-glutamyl-meso-2,6-diaminopimeloyl-D-alanyl-D-alanine + UDP-N-acetyl-alpha-D-glucosamine = di-trans,octa-cis-undecaprenyl diphospho-[N-acetyl-alpha-D-glucosaminyl-(1-&gt;4)]-N-acetyl-alpha-D-muramoyl-L-alanyl-D-glutamyl-meso-2,6-diaminopimeloyl-D-alanyl-D-alanine + UDP + H(+). It functions in the pathway cell wall biogenesis; peptidoglycan biosynthesis. Cell wall formation. Catalyzes the transfer of a GlcNAc subunit on undecaprenyl-pyrophosphoryl-MurNAc-pentapeptide (lipid intermediate I) to form undecaprenyl-pyrophosphoryl-MurNAc-(pentapeptide)GlcNAc (lipid intermediate II). The polypeptide is UDP-N-acetylglucosamine--N-acetylmuramyl-(pentapeptide) pyrophosphoryl-undecaprenol N-acetylglucosamine transferase (Acinetobacter baumannii (strain ATCC 17978 / DSM 105126 / CIP 53.77 / LMG 1025 / NCDC KC755 / 5377)).